Here is a 295-residue protein sequence, read N- to C-terminus: Methionine aminopeptidase (295 aa).

His-62 contributes to the substrate binding site. 3 residues coordinate a divalent metal cation: Asp-82, Asp-93, and His-153. His-161 is a substrate binding site. A divalent metal cation contacts are provided by Glu-187 and Glu-280.

The protein belongs to the peptidase M24A family. Methionine aminopeptidase archaeal type 2 subfamily. Monomer. Requires Co(2+) as cofactor. Zn(2+) serves as cofactor. It depends on Mn(2+) as a cofactor. The cofactor is Fe(2+).

The enzyme catalyses Release of N-terminal amino acids, preferentially methionine, from peptides and arylamides.. Removes the N-terminal methionine from nascent proteins. The N-terminal methionine is often cleaved when the second residue in the primary sequence is small and uncharged (Met-Ala-, Cys, Gly, Pro, Ser, Thr, or Val). The protein is Methionine aminopeptidase of Pyrococcus abyssi (strain GE5 / Orsay).